We begin with the raw amino-acid sequence, 401 residues long: NADH-quinone oxidoreductase subunit D (401 aa).

This sequence belongs to the complex I 49 kDa subunit family. In terms of assembly, NDH-1 is composed of 15 different subunits. Subunits NuoB, C, D, E, F, and G constitute the peripheral sector of the complex.

The protein localises to the cell membrane. It catalyses the reaction a quinone + NADH + 5 H(+)(in) = a quinol + NAD(+) + 4 H(+)(out). Functionally, NDH-1 shuttles electrons from NADH, via FMN and iron-sulfur (Fe-S) centers, to quinones in the respiratory chain. The immediate electron acceptor for the enzyme in this species is believed to be a menaquinone. Couples the redox reaction to proton translocation (for every two electrons transferred, four hydrogen ions are translocated across the cytoplasmic membrane), and thus conserves the redox energy in a proton gradient. In Deinococcus radiodurans (strain ATCC 13939 / DSM 20539 / JCM 16871 / CCUG 27074 / LMG 4051 / NBRC 15346 / NCIMB 9279 / VKM B-1422 / R1), this protein is NADH-quinone oxidoreductase subunit D.